The primary structure comprises 145 residues: Large ribosomal subunit protein uL15 (145 aa).

2 stretches are compositionally biased toward basic residues: residues 1 to 13 (MVRE…RGGH) and 19 to 29 (KAGRGKGKKGG). Residues 1–33 (MVRERTKKLRGGHYGRGMKAGRGKGKKGGRGNA) are disordered.

It belongs to the universal ribosomal protein uL15 family. In terms of assembly, part of the 50S ribosomal subunit.

Its function is as follows. Binds to the 23S rRNA. The protein is Large ribosomal subunit protein uL15 of Thermoplasma volcanium (strain ATCC 51530 / DSM 4299 / JCM 9571 / NBRC 15438 / GSS1).